A 99-amino-acid polypeptide reads, in one-letter code: Large ribosomal subunit protein uL23 (99 aa).

Belongs to the universal ribosomal protein uL23 family. Part of the 50S ribosomal subunit. Contacts protein L29, and trigger factor when it is bound to the ribosome.

One of the early assembly proteins it binds 23S rRNA. One of the proteins that surrounds the polypeptide exit tunnel on the outside of the ribosome. Forms the main docking site for trigger factor binding to the ribosome. This is Large ribosomal subunit protein uL23 from Stenotrophomonas maltophilia (strain R551-3).